A 363-amino-acid polypeptide reads, in one-letter code: Dihydroorotate dehydrogenase (quinone) (363 aa).

FMN-binding positions include 62–66 and Thr86; that span reads AGYDK. Lys66 lines the substrate pocket. 111 to 115 contacts substrate; the sequence is NRLGF. Residues Asn139 and Asn170 each coordinate FMN. Asn170 is a substrate binding site. Ser173 (nucleophile) is an active-site residue. Asn175 lines the substrate pocket. Positions 215 and 243 each coordinate FMN. 244–245 is a substrate binding site; it reads NT. Residues Gly266, Gly295, and 316–317 each bind FMN; that span reads YS.

The protein belongs to the dihydroorotate dehydrogenase family. Type 2 subfamily. As to quaternary structure, monomer. Requires FMN as cofactor.

It localises to the cell membrane. It catalyses the reaction (S)-dihydroorotate + a quinone = orotate + a quinol. It functions in the pathway pyrimidine metabolism; UMP biosynthesis via de novo pathway; orotate from (S)-dihydroorotate (quinone route): step 1/1. In terms of biological role, catalyzes the conversion of dihydroorotate to orotate with quinone as electron acceptor. The polypeptide is Dihydroorotate dehydrogenase (quinone) (Agrobacterium fabrum (strain C58 / ATCC 33970) (Agrobacterium tumefaciens (strain C58))).